The following is a 485-amino-acid chain: Alginate biosynthesis protein AlgA (485 aa).

Belongs to the mannose-6-phosphate isomerase type 2 family. Monomer. It depends on Co(2+) as a cofactor.

The catalysed reaction is D-mannose 6-phosphate = D-fructose 6-phosphate. It carries out the reaction alpha-D-mannose 1-phosphate + GTP + H(+) = GDP-alpha-D-mannose + diphosphate. It functions in the pathway nucleotide-sugar biosynthesis; GDP-alpha-D-mannose biosynthesis; GDP-alpha-D-mannose from alpha-D-mannose 1-phosphate (GTP route): step 1/1. Its pathway is nucleotide-sugar biosynthesis; GDP-alpha-D-mannose biosynthesis; alpha-D-mannose 1-phosphate from D-fructose 6-phosphate: step 1/2. Produces a precursor for alginate polymerization. The alginate layer provides a protective barrier against host immune defenses and antibiotics. The protein is Alginate biosynthesis protein AlgA (algA) of Pseudomonas putida (strain ATCC 47054 / DSM 6125 / CFBP 8728 / NCIMB 11950 / KT2440).